We begin with the raw amino-acid sequence, 414 residues long: NAD-specific glutamate dehydrogenase (414 aa).

Substrate is bound by residues lysine 70 and lysine 94. Lysine 106 serves as the catalytic Proton donor. Threonine 190 and asparagine 221 together coordinate NAD(+). Serine 348 contributes to the substrate binding site.

The protein belongs to the Glu/Leu/Phe/Val dehydrogenases family. In terms of assembly, homohexamer.

The enzyme catalyses L-glutamate + NAD(+) + H2O = 2-oxoglutarate + NH4(+) + NADH + H(+). This chain is NAD-specific glutamate dehydrogenase (gluD), found in Staphylococcus aureus (strain COL).